The chain runs to 271 residues: Probable diacyglycerol O-acyltransferase tgs3 (271 aa).

It belongs to the long-chain O-acyltransferase family.

The enzyme catalyses an acyl-CoA + a 1,2-diacyl-sn-glycerol = a triacyl-sn-glycerol + CoA. It functions in the pathway glycerolipid metabolism; triacylglycerol biosynthesis. Functionally, catalyzes the terminal and only committed step in triacylglycerol synthesis by using diacylglycerol and fatty acyl CoA as substrates. Required for storage lipid synthesis. The chain is Probable diacyglycerol O-acyltransferase tgs3 (tgs3) from Mycobacterium tuberculosis (strain CDC 1551 / Oshkosh).